A 1223-amino-acid polypeptide reads, in one-letter code: ATP-dependent DNA helicase P143 (1223 aa).

The short motif at 692–701 is the Nuclear localization signal element; that stretch reads RKCRCVQKIK. 919 to 926 contacts ATP; sequence GVPLSGKS. The segment at residues 967 to 981 is a DNA-binding region (H-T-H motif); sequence TINELKKCSESFFKK.

It localises to the host nucleus. The enzyme catalyses ATP + H2O = ADP + phosphate + H(+). Essential for the initiation of viral DNA replication, it may contribute to other functions such as controlling the switch to the late phase and leading to the inhibition of host protein synthesis. Required for late and very late gene expression. This Orgyia pseudotsugata multicapsid polyhedrosis virus (OpMNPV) protein is ATP-dependent DNA helicase P143 (P143).